The sequence spans 192 residues: Ion-translocating oxidoreductase complex subunit A (192 aa).

6 helical membrane-spanning segments follow: residues 5–25 (LLLL…FLGL), 39–59 (IGMS…SYLV), 72–92 (LRTM…EMLV), 102–122 (ALGI…VALL), 134–154 (AIYG…FSAM), and 171–191 (AIAM…TGLV).

It belongs to the NqrDE/RnfAE family. As to quaternary structure, the complex is composed of six subunits: RnfA, RnfB, RnfC, RnfD, RnfE and RnfG.

The protein localises to the cell inner membrane. Part of a membrane-bound complex that couples electron transfer with translocation of ions across the membrane. This is Ion-translocating oxidoreductase complex subunit A from Shewanella loihica (strain ATCC BAA-1088 / PV-4).